The chain runs to 1171 residues: DExH-box ATP-dependent RNA helicase DExH15 chloroplastic (1171 aa).

A chloroplast-targeting transit peptide spans Met1 to Ser58. Over residues Asn53–Leu62 the composition is skewed to polar residues. The tract at residues Asn53–Leu111 is disordered. 2 stretches are compositionally biased toward acidic residues: residues Tyr63–Ser90 and Asp97–Phe107. In terms of domain architecture, Helicase ATP-binding spans Ile163–Glu327. An ATP-binding site is contributed by Ala176–Thr183. The DEVH box motif lies at Asp275 to His278. Positions Gln424–Val620 constitute a Helicase C-terminal domain.

This sequence belongs to the DExH box helicase family.

Its subcellular location is the plastid. It is found in the chloroplast. The protein resides in the cytoplasmic granule. It carries out the reaction ATP + H2O = ADP + phosphate + H(+). In terms of biological role, RNA helicase involved in group II intron splicing. Essential protein required during embryogenesis. Involved in post-transcriptional gene silencing. Modulates the determination of cell fate. Necessary for normal plasmodesmata (PD) development and aperture regulation. This Arabidopsis thaliana (Mouse-ear cress) protein is DExH-box ATP-dependent RNA helicase DExH15 chloroplastic (ISE2).